The chain runs to 189 residues: Peptidyl-tRNA hydrolase (189 aa).

Residue Tyr-15 coordinates tRNA. His-20 functions as the Proton acceptor in the catalytic mechanism. Residues Phe-66, Asn-68, and Asn-114 each coordinate tRNA.

This sequence belongs to the PTH family. As to quaternary structure, monomer.

The protein resides in the cytoplasm. It catalyses the reaction an N-acyl-L-alpha-aminoacyl-tRNA + H2O = an N-acyl-L-amino acid + a tRNA + H(+). Functionally, hydrolyzes ribosome-free peptidyl-tRNAs (with 1 or more amino acids incorporated), which drop off the ribosome during protein synthesis, or as a result of ribosome stalling. Its function is as follows. Catalyzes the release of premature peptidyl moieties from peptidyl-tRNA molecules trapped in stalled 50S ribosomal subunits, and thus maintains levels of free tRNAs and 50S ribosomes. The chain is Peptidyl-tRNA hydrolase from Streptococcus sanguinis (strain SK36).